Reading from the N-terminus, the 442-residue chain is NEDD8-activating enzyme E1 catalytic subunit (442 aa).

ATP-binding positions include 80-104 and 128-151; these read DMDT…GKSK and IQDK…SIEA. The Glycyl thioester intermediate role is filled by Cys-218.

This sequence belongs to the ubiquitin-activating E1 family. UBA3 subfamily. As to quaternary structure, heterodimer of uba3 and nae1. The complex binds nedd8 and ube2m.

It carries out the reaction ATP + [NEDD8 protein] + [E1 NEDD8-activating enzyme]-L-cysteine = AMP + diphosphate + [E1 NEDD8-activating enzyme]-S-[NEDD8 protein]-yl-L-cysteine.. The protein operates within protein modification; protein neddylation. In terms of biological role, regulatory subunit of the dimeric uba3-nae1 E1 enzyme. E1 activates nedd8 by first adenylating its C-terminal glycine residue with ATP, thereafter linking this residue to the side chain of the catalytic cysteine, yielding a nedd8-uba3 thioester and free AMP. E1 finally transfers nedd8 to the catalytic cysteine of ube2m. The polypeptide is NEDD8-activating enzyme E1 catalytic subunit (uba3) (Dictyostelium discoideum (Social amoeba)).